We begin with the raw amino-acid sequence, 53 residues long: Metallocarboxypeptidase inhibitor (53 aa).

Cystine bridges form between Cys9–Cys23, Cys15–Cys51, and Cys27–Cys38. Residue Ala53 coordinates Zn(2+).

As to quaternary structure, monomer. Interacts (via C-terminus) with human CPA4.

Its function is as follows. Metallocarboxypeptidase inhibitor. Has an inhibitory effect on bovine CPA1 and CPB2, human CPA1, CPA2, CPA4, CPB1 and CPB2, and porcine CPB1. Does not inhibit D.melanogaster svr (carboxypeptidase D). Shows no activity against serine proteases subtilisin or bovine trypsin, cysteine protease papain, and aspartyl protease porcine pepsin. The polypeptide is Metallocarboxypeptidase inhibitor (Nerita versicolor (Four-tooth nerite)).